We begin with the raw amino-acid sequence, 213 residues long: Phosphatidylserine decarboxylase proenzyme (213 aa).

Ser-182 (schiff-base intermediate with substrate; via pyruvic acid) is an active-site residue. Position 182 is a pyruvic acid (Ser); by autocatalysis (Ser-182).

Belongs to the phosphatidylserine decarboxylase family. PSD-A subfamily. Heterodimer of a large membrane-associated beta subunit and a small pyruvoyl-containing alpha subunit. It depends on pyruvate as a cofactor. Is synthesized initially as an inactive proenzyme. Formation of the active enzyme involves a self-maturation process in which the active site pyruvoyl group is generated from an internal serine residue via an autocatalytic post-translational modification. Two non-identical subunits are generated from the proenzyme in this reaction, and the pyruvate is formed at the N-terminus of the alpha chain, which is derived from the carboxyl end of the proenzyme. The post-translation cleavage follows an unusual pathway, termed non-hydrolytic serinolysis, in which the side chain hydroxyl group of the serine supplies its oxygen atom to form the C-terminus of the beta chain, while the remainder of the serine residue undergoes an oxidative deamination to produce ammonia and the pyruvoyl prosthetic group on the alpha chain.

Its subcellular location is the cell membrane. It carries out the reaction a 1,2-diacyl-sn-glycero-3-phospho-L-serine + H(+) = a 1,2-diacyl-sn-glycero-3-phosphoethanolamine + CO2. It participates in phospholipid metabolism; phosphatidylethanolamine biosynthesis; phosphatidylethanolamine from CDP-diacylglycerol: step 2/2. Functionally, catalyzes the formation of phosphatidylethanolamine (PtdEtn) from phosphatidylserine (PtdSer). The protein is Phosphatidylserine decarboxylase proenzyme of Geotalea daltonii (strain DSM 22248 / JCM 15807 / FRC-32) (Geobacter daltonii).